Here is a 115-residue protein sequence, read N- to C-terminus: U3-lycotoxin-Ls1a (115 aa).

An N-terminal signal peptide occupies residues 1-20 (MKFVLLFGVLLLTLFSYSSA). The propeptide occupies 21 to 44 (EMLDDFDQADEDELLSLIEKEEAR). Intrachain disulfides connect Cys-48-Cys-63, Cys-55-Cys-72, Cys-62-Cys-87, and Cys-74-Cys-85.

This sequence belongs to the neurotoxin 19 (CSTX) family. 01 subfamily. Expressed by the venom gland.

It is found in the secreted. This Lycosa singoriensis (Wolf spider) protein is U3-lycotoxin-Ls1a.